Here is a 363-residue protein sequence, read N- to C-terminus: 3-isopropylmalate dehydrogenase (363 aa).

Residue 78-91 (GPKWEHLPPDQQPE) coordinates NAD(+). Substrate is bound by residues Arg-99, Arg-109, Arg-138, and Asp-227. Mg(2+) is bound by residues Asp-227, Asp-251, and Asp-255. 285–297 (GSAPDIAGKNIAN) is an NAD(+) binding site.

It belongs to the isocitrate and isopropylmalate dehydrogenases family. LeuB type 1 subfamily. Homodimer. Mg(2+) is required as a cofactor. Requires Mn(2+) as cofactor.

The protein localises to the cytoplasm. The enzyme catalyses (2R,3S)-3-isopropylmalate + NAD(+) = 4-methyl-2-oxopentanoate + CO2 + NADH. Its pathway is amino-acid biosynthesis; L-leucine biosynthesis; L-leucine from 3-methyl-2-oxobutanoate: step 3/4. In terms of biological role, catalyzes the oxidation of 3-carboxy-2-hydroxy-4-methylpentanoate (3-isopropylmalate) to 3-carboxy-4-methyl-2-oxopentanoate. The product decarboxylates to 4-methyl-2 oxopentanoate. The polypeptide is 3-isopropylmalate dehydrogenase (Shigella sonnei (strain Ss046)).